The sequence spans 958 residues: MRSQRLAGHLSAAARTIHALSLPIILFWVALTIVVNVVAPQLQSVARTHSVALGPHDAPSLIAMKRIGKDFQQFDSDTTAMVLLEGQEKLGDEAHRFYDVLVTKLSQDTTHVQHIENFWGDPLTAAGSQSADGKAAYVQLNLTGDQGGSQANESVAAVQRIVDSVPPPPGIKAYVTGPGPLGADRVVYGDRSLHTITGISIAVIAIMLFIAYRSLSAALIMLLTVGLELLAVRGIISTFAVNDLMGLSTFTVNVLVALTIAASTDYIIFLVGRYQEARATGQNREAAYYTMFGGTAHVVLASGLTVAGAMYCLGFTRLPYFNTLASPCAIGLVTVMLASLTLAPAIIAVASRFGLFDPKRATTKRRWRRIGTVVVRWPGPVLAATLLIALIGLLALPKYQTNYNERYYIPSAAPSNIGYLASDRHFPQARMEPEVLMVEADHDLRNPTDMLILDRIAKTVFHTPGIARVQSITRPLGAPIDHSSIPFQLGMQSTMTIENLQNLKDRVADLSTLTDQLQRMIDITQRTQELTRQLTDATHDMNAHTRQMRDNANELRDRIADFDDFWRPLRSFTYWERHCFDIPICWSMRSLLNSMDNVDKLTEDLANLTDDTERMDTTQRQLLAQLDPTIATMQTVKDLAQTLTSAFSGLVTQMEDMTRNATVMGRTFDAANNDDSFYLPPEAFQNPDFQRGLKLFLSPDGTCARFVITHRGDPASAEGISHIDPIMQAADEAVKGTPLQAASIYLAGTSSTYKDIHEGTLYDVMIAVVASLCLIFIIMLGITRSVVASAVIVGTVALSLGSAFGLSVLIWQHILHMPLHWLVLPMAIIVMLAVGSDYNLLLIARFQEEIGAGLKTGMIRAMAGTGRVVTIAGLVFAFTMGSMVASDLRVVGQIGTTIMIGLLFDTLVVRSYMTPALATLLGRWFWWPRRVDRLARQPQVLGPRRTTALSAERAALLQ.

Transmembrane regions (helical) follow at residues 19–39 (ALSL…NVVA), 192–212 (SLHT…FIAY), 216–236 (SAAL…RGII), 252–272 (VNVL…FLVG), 295–315 (TAHV…CLGF), 329–349 (AIGL…IIAV), 377–397 (WPGP…LALP), 762–782 (YDVM…MLGI), 791–811 (VIVG…VLIW), 814–834 (ILHM…MLAV), 868–888 (VVTI…ASDL), and 906–927 (TLVV…WFWW).

This sequence belongs to the resistance-nodulation-cell division (RND) (TC 2.A.6) family. MmpL subfamily.

The protein localises to the cell membrane. The chain is Probable transport protein MmpL1 (mmpL1) from Mycobacterium tuberculosis (strain CDC 1551 / Oshkosh).